We begin with the raw amino-acid sequence, 969 residues long: Manganese resistance protein MNR2 (969 aa).

The span at 1–11 shows a compositional bias: basic and acidic residues; sequence MSTDNSQKDEG. 4 disordered regions span residues 1-49, 96-153, 167-186, and 199-256; these read MSTD…SRRP, GAFI…DLSP, HKSF…NANN, and VNNN…NNSS. The Cytoplasmic segment spans residues 1–912; sequence MSTDNSQKDE…DMNDVLGKIT (912 aa). Residues 13–23 show a composition bias toward low complexity; the sequence is PLLSPYSSSPQ. The segment covering 24 to 36 has biased composition (basic residues); sequence LRKKKRNQKRRKD. The segment covering 37–48 has biased composition (basic and acidic residues); it reads KFVGHLKSDSRR. Serine 114 bears the Phosphoserine mark. Over residues 141 to 152 the composition is skewed to polar residues; it reads SDQNRSLVSDLS. Position 175 is a phosphoserine (serine 175). The residue at position 177 (threonine 177) is a Phosphothreonine. Serine 182 bears the Phosphoserine mark. Composition is skewed to low complexity over residues 225–234 and 244–256; these read NKNSKSTSSD and SRPS…NNSS. Serine 383 is subject to Phosphoserine. Disordered regions lie at residues 559-662 and 746-769; these read VRRR…KPRE and QSDD…DEDA. Basic and acidic residues predominate over residues 565–578; it reads EKQESATLDHESIS. The residue at position 571 (threonine 571) is a Phosphothreonine. Phosphoserine is present on residues serine 576 and serine 582. Low complexity-rich tracts occupy residues 590-607 and 622-632; these read SNES…ASRS and ANRTTNTSSSS. Residues 749–769 show a composition bias toward acidic residues; it reads DSSDSDSSDSDSDSGASDEDA. A helical transmembrane segment spans residues 913-933; sequence ILGTIVLPMNVITGLWGMNVI. Over 934–941 the chain is Extracellular; it reads VPGQYRDS. The helical transmembrane segment at 942–962 threads the bilayer; it reads LTWFIGIVLFMCMLACSAYMY. The Cytoplasmic segment spans residues 963–969; sequence TKRRFGF.

Belongs to the CorA metal ion transporter (MIT) (TC 1.A.35) family.

It is found in the membrane. The chain is Manganese resistance protein MNR2 (MNR2) from Saccharomyces cerevisiae (strain ATCC 204508 / S288c) (Baker's yeast).